Consider the following 336-residue polypeptide: Retinol dehydrogenase 14 (336 aa).

T5 is subject to Phosphothreonine. Residue 50–56 (GANSGLG) coordinates NADP(+). S192 provides a ligand contact to substrate. The Proton acceptor role is filled by Y217.

This sequence belongs to the short-chain dehydrogenases/reductases (SDR) family. As to expression, widely expressed.

It carries out the reaction all-trans-retinol + NADP(+) = all-trans-retinal + NADPH + H(+). It catalyses the reaction 9-cis-retinol + NADP(+) = 9-cis-retinal + NADPH + H(+). The catalysed reaction is 11-cis-retinol + NADP(+) = 11-cis-retinal + NADPH + H(+). The protein operates within cofactor metabolism; retinol metabolism. Retinol dehydrogenase with a clear preference for NADP. Displays high activity towards 9-cis, 11-cis and all-trans-retinol. Shows a very weak activity towards 13-cis-retinol. Has no activity towards steroid. This is Retinol dehydrogenase 14 (RDH14) from Homo sapiens (Human).